We begin with the raw amino-acid sequence, 814 residues long: Immunoglobulin superfamily DCC subclass member 3 (814 aa).

Residues Met-1–Gly-35 form the signal peptide. Ig-like C2-type domains lie at Leu-36–Ser-139, Asp-140–Ser-220, Pro-238–Gln-321, and Pro-329–Thr-416. Cystine bridges form between Cys-63–Cys-117 and Cys-160–Cys-209. Residue Asn-93 is glycosylated (N-linked (GlcNAc...) asparagine). A glycan (N-linked (GlcNAc...) asparagine) is linked at Asn-246. Disulfide bonds link Cys-259–Cys-307 and Cys-351–Cys-400. N-linked (GlcNAc...) asparagine glycosylation is found at Asn-381 and Asn-382. 2 consecutive Fibronectin type-III domains span residues Pro-426–Glu-520 and Ala-523–Arg-618. Residues Asn-580, Asn-604, and Asn-634 are each glycosylated (N-linked (GlcNAc...) asparagine). Residues Ile-641–Phe-661 traverse the membrane as a helical segment. Disordered stretches follow at residues Pro-722–Pro-743 and Gly-762–Gln-814. Low complexity predominate over residues Thr-770 to Ala-781.

The protein belongs to the immunoglobulin superfamily. DCC family.

It is found in the membrane. In Homo sapiens (Human), this protein is Immunoglobulin superfamily DCC subclass member 3 (IGDCC3).